The primary structure comprises 475 residues: Zinc finger protein 383 (475 aa).

One can recognise a KRAB domain in the interval 6-77 (VMFSDVSIDF…GRELTRGLCS (72 aa)). 11 C2H2-type zinc fingers span residues 170 to 192 (FECK…QRIH), 198 to 220 (YECK…LKIH), 226 to 248 (FECK…QRIH), 254 to 276 (YECK…QRIH), 282 to 304 (YACK…VRIH), 310 to 332 (YECK…QRIH), 338 to 360 (YECK…QRIH), 366 to 388 (YDCK…QRIH), 394 to 416 (FECL…QRIH), 422 to 444 (YECN…LRIH), and 450 to 472 (YNCK…QGIH).

Belongs to the krueppel C2H2-type zinc-finger protein family.

The protein localises to the nucleus. It is found in the cytoplasm. Its function is as follows. May function as a transcriptional repressor, suppressing transcriptional activities mediated by MAPK signaling pathways. This is Zinc finger protein 383 (ZNF383) from Macaca fascicularis (Crab-eating macaque).